The following is a 90-amino-acid chain: UPF0237 protein BL1209.1 (90 aa).

One can recognise an ACT domain in the interval 5-79; that stretch reads IITVVGQDTV…DDIGVRIRCQ (75 aa).

It belongs to the UPF0237 family.

This chain is UPF0237 protein BL1209.1, found in Bifidobacterium longum (strain NCC 2705).